The following is a 227-amino-acid chain: Uridylate kinase (227 aa).

7-11 (KISGK) is a binding site for ATP. Position 44 (Gly-44) interacts with UMP. The ATP site is built by Gly-45 and Arg-49. Residues Asp-66 and 114 to 120 (FQPGQST) contribute to the UMP site. Residues Thr-140, Asn-141, Tyr-146, and Asp-149 each contribute to the ATP site.

It belongs to the UMP kinase family. Homohexamer.

It localises to the cytoplasm. The catalysed reaction is UMP + ATP = UDP + ADP. It participates in pyrimidine metabolism; CTP biosynthesis via de novo pathway; UDP from UMP (UMPK route): step 1/1. Unlike most bacteria, is not activated by GTP. UTP acts as a competitive inhibitor against both substrates. High concentration of UMP abolishes the inhibition of UTP at low ATP concentrations, indicating that UTP binds to the acceptor site (UMP site). Functionally, catalyzes the reversible phosphorylation of UMP to UDP, with ATP as the most efficient phosphate donor. Is also able to phosphorylate dUMP, although much less efficiently. The protein is Uridylate kinase (pyrH) of Saccharolobus solfataricus (strain ATCC 35092 / DSM 1617 / JCM 11322 / P2) (Sulfolobus solfataricus).